Consider the following 61-residue polypeptide: Large ribosomal subunit protein uL30 (61 aa).

It belongs to the universal ribosomal protein uL30 family. As to quaternary structure, part of the 50S ribosomal subunit.

The polypeptide is Large ribosomal subunit protein uL30 (Laribacter hongkongensis (strain HLHK9)).